The sequence spans 157 residues: 2-C-methyl-D-erythritol 2,4-cyclodiphosphate synthase (157 aa).

A divalent metal cation is bound by residues D8 and H10. 4-CDP-2-C-methyl-D-erythritol 2-phosphate is bound by residues 8-10 (DVH) and 34-35 (HS). H42 is an a divalent metal cation binding site. Residues 56 to 58 (DIG), 61 to 65 (FPDTD), 100 to 106 (AQAPKMA), 132 to 135 (TTTE), F139, and R142 contribute to the 4-CDP-2-C-methyl-D-erythritol 2-phosphate site.

This sequence belongs to the IspF family. Homotrimer. A divalent metal cation is required as a cofactor.

It catalyses the reaction 4-CDP-2-C-methyl-D-erythritol 2-phosphate = 2-C-methyl-D-erythritol 2,4-cyclic diphosphate + CMP. Its pathway is isoprenoid biosynthesis; isopentenyl diphosphate biosynthesis via DXP pathway; isopentenyl diphosphate from 1-deoxy-D-xylulose 5-phosphate: step 4/6. Functionally, involved in the biosynthesis of isopentenyl diphosphate (IPP) and dimethylallyl diphosphate (DMAPP), two major building blocks of isoprenoid compounds. Catalyzes the conversion of 4-diphosphocytidyl-2-C-methyl-D-erythritol 2-phosphate (CDP-ME2P) to 2-C-methyl-D-erythritol 2,4-cyclodiphosphate (ME-CPP) with a corresponding release of cytidine 5-monophosphate (CMP). This is 2-C-methyl-D-erythritol 2,4-cyclodiphosphate synthase from Pseudomonas fluorescens (strain Pf0-1).